A 163-amino-acid chain; its full sequence is Antimicrobial peptide 2 (163 aa).

A signal peptide spans 1–22 (MLNMKSFALLMLFATLVGVTIA). 2 Chitin-binding type-1 domains span residues 26–66 (NGKC…EIEP) and 69–107 (AGQC…SCLP). 3 cysteine pairs are disulfide-bonded: cysteine 29–cysteine 42, cysteine 36–cysteine 48, and cysteine 41–cysteine 55. The propeptide occupies 58–67 (NTPLSEIEPT). Cystine bridges form between cysteine 72–cysteine 83, cysteine 77–cysteine 89, cysteine 82–cysteine 96, and cysteine 101–cysteine 105. Residues 100–163 (MCQGSCLPDM…QVEPAVTKAP (64 aa)) constitute a propeptide that is removed on maturation.

In terms of tissue distribution, expressed in roots, flowers, stem and leaves.

Its function is as follows. Antimicrobial peptide. The protein is Antimicrobial peptide 2 of Stellaria media (Common chickweed).